The following is a 334-amino-acid chain: Mitochondrial glycine transporter (334 aa).

3 Solcar repeats span residues 10–94 (SKSS…IRQA), 127–211 (LSNT…FKRR), and 234–318 (RAAA…LIMR). 6 consecutive transmembrane segments (helical) span residues 16–41 (FVAG…TRVQ), 69–95 (GTVP…RQAA), 133–158 (LLAG…VRYE), 186–209 (GFGA…EQFK), 238–264 (VNFS…KTRI), and 293–311 (GLGL…AWTL).

Belongs to the mitochondrial carrier (TC 2.A.29) family. SLC25A38 subfamily.

It localises to the mitochondrion inner membrane. The enzyme catalyses glycine(in) = glycine(out). Mitochondrial glycine transporter that imports glycine into the mitochondrial matrix. Plays an important role in providing glycine for the first enzymatic step in heme biosynthesis, the condensation of glycine with succinyl-CoA to produce 5-aminolevulinate (ALA) in the mitochondrial matrix. The sequence is that of Mitochondrial glycine transporter from Pyricularia oryzae (strain 70-15 / ATCC MYA-4617 / FGSC 8958) (Rice blast fungus).